A 210-amino-acid polypeptide reads, in one-letter code: Large ribosomal subunit protein bL9 (210 aa).

Residues 172–210 (EAAAAALEPDSEEEFEAATPPSELAAEASDEDADDAKEA) form a disordered region. Acidic residues predominate over residues 199–210 (ASDEDADDAKEA).

The protein belongs to the bacterial ribosomal protein bL9 family.

Its function is as follows. Binds to the 23S rRNA. This is Large ribosomal subunit protein bL9 from Sphingopyxis alaskensis (strain DSM 13593 / LMG 18877 / RB2256) (Sphingomonas alaskensis).